The primary structure comprises 213 residues: uncharacterized protein (213 aa).

3 helical membrane-spanning segments follow: residues 26–46 (FINF…GLKV), 112–132 (ASYI…AGIW), and 136–156 (AGLA…SFLI).

The protein resides in the cell membrane. This is an uncharacterized protein from Haemophilus influenzae (strain ATCC 51907 / DSM 11121 / KW20 / Rd).